Consider the following 432-residue polypeptide: Glutamyl-tRNA reductase (432 aa).

Substrate contacts are provided by residues 55–58 (TCNR), Ser-114, 119–121 (ETQ), and Gln-125. The active-site Nucleophile is the Cys-56. 194–199 (GAGEMI) is an NADP(+) binding site.

This sequence belongs to the glutamyl-tRNA reductase family. In terms of assembly, homodimer.

It carries out the reaction (S)-4-amino-5-oxopentanoate + tRNA(Glu) + NADP(+) = L-glutamyl-tRNA(Glu) + NADPH + H(+). It participates in porphyrin-containing compound metabolism; protoporphyrin-IX biosynthesis; 5-aminolevulinate from L-glutamyl-tRNA(Glu): step 1/2. Catalyzes the NADPH-dependent reduction of glutamyl-tRNA(Glu) to glutamate 1-semialdehyde (GSA). The sequence is that of Glutamyl-tRNA reductase from Burkholderia orbicola (strain AU 1054).